Consider the following 419-residue polypeptide: UDP-N-acetylglucosamine 1-carboxyvinyltransferase (419 aa).

Lys-22 to Asn-23 provides a ligand contact to phosphoenolpyruvate. A UDP-N-acetyl-alpha-D-glucosamine-binding site is contributed by Arg-91. Cys-115 serves as the catalytic Proton donor. Cys-115 carries the 2-(S-cysteinyl)pyruvic acid O-phosphothioketal modification. UDP-N-acetyl-alpha-D-glucosamine-binding positions include Arg-120–Leu-124, Lys-160–Val-163, Asp-305, and Ile-327.

Belongs to the EPSP synthase family. MurA subfamily.

It localises to the cytoplasm. It carries out the reaction phosphoenolpyruvate + UDP-N-acetyl-alpha-D-glucosamine = UDP-N-acetyl-3-O-(1-carboxyvinyl)-alpha-D-glucosamine + phosphate. It functions in the pathway cell wall biogenesis; peptidoglycan biosynthesis. Cell wall formation. Adds enolpyruvyl to UDP-N-acetylglucosamine. In Cronobacter sakazakii (strain ATCC BAA-894) (Enterobacter sakazakii), this protein is UDP-N-acetylglucosamine 1-carboxyvinyltransferase.